Here is a 386-residue protein sequence, read N- to C-terminus: S-adenosylmethionine synthase (386 aa).

Histidine 14 serves as a coordination point for ATP. Aspartate 16 serves as a coordination point for Mg(2+). Residue glutamate 42 coordinates K(+). L-methionine is bound by residues glutamate 55 and glutamine 98. Residues 98–108 (QSGDISQGVDG) are flexible loop. Residues 162–164 (DSK), 230–231 (RF), aspartate 239, 245–246 (RK), alanine 262, and lysine 266 contribute to the ATP site. Aspartate 239 serves as a coordination point for L-methionine. Residue lysine 270 participates in L-methionine binding.

The protein belongs to the AdoMet synthase family. Homotetramer; dimer of dimers. The cofactor is Mg(2+). K(+) serves as cofactor.

Its subcellular location is the cytoplasm. The enzyme catalyses L-methionine + ATP + H2O = S-adenosyl-L-methionine + phosphate + diphosphate. The protein operates within amino-acid biosynthesis; S-adenosyl-L-methionine biosynthesis; S-adenosyl-L-methionine from L-methionine: step 1/1. In terms of biological role, catalyzes the formation of S-adenosylmethionine (AdoMet) from methionine and ATP. The overall synthetic reaction is composed of two sequential steps, AdoMet formation and the subsequent tripolyphosphate hydrolysis which occurs prior to release of AdoMet from the enzyme. This chain is S-adenosylmethionine synthase, found in Salinibacter ruber (strain DSM 13855 / M31).